The chain runs to 620 residues: Endoglucanase 10 (620 aa).

Residues 1-26 (MFGRDPWGGPLEISNADSATDDDRSR) are disordered. A helical; Signal-anchor for type II membrane protein membrane pass occupies residues 72-92 (IFMWTVGTILGVGLFIGFVMM). The Nucleophile role is filled by Asp-165. N-linked (GlcNAc...) asparagine glycosylation is found at Asn-216, Asn-314, Asn-323, Asn-344, Asn-408, and Asn-425. Residues His-513 and Asp-561 contribute to the active site. Asn-567 is a glycosylation site (N-linked (GlcNAc...) asparagine). Glu-570 is an active-site residue.

It belongs to the glycosyl hydrolase 9 (cellulase E) family. As to expression, ubiquitous.

Its subcellular location is the membrane. It catalyses the reaction Endohydrolysis of (1-&gt;4)-beta-D-glucosidic linkages in cellulose, lichenin and cereal beta-D-glucans.. This chain is Endoglucanase 10 (GLU2), found in Oryza sativa subsp. japonica (Rice).